Reading from the N-terminus, the 624-residue chain is Kelch-like ECH-associated protein 1 (624 aa).

C38 is subject to S-(2-succinyl)cysteine. The region spanning 77 to 149 (CDVTLQVKYE…AYTASISVGE (73 aa)) is the BTB domain. Residue R135 forms an N5-[4-(S-L-cysteinyl)-5-methyl-1H-imidazol-2-yl]-L-ornithine (Arg-Cys) (interchain with C-151 in KEAP1) linkage. C151 carries the S-(2,3-dicarboxypropyl)cysteine; alternate modification. S-(2-succinyl)cysteine; alternate is present on C151. Residue C151 is modified to S-nitrosocysteine; alternate. Residue C151 forms an N5-[4-(S-L-cysteinyl)-5-methyl-1H-imidazol-2-yl]-L-ornithine (Cys-Arg) (interchain with R-135 in KEAP1) linkage. The region spanning 184-286 (AIGIANFAEQ…TPRFLQTQLQ (103 aa)) is the BACK domain. The residue at position 241 (C241) is an S-(2-succinyl)cysteine. Residues C257 and C273 each carry the S-(2,3-dicarboxypropyl)cysteine modification. Residue C288 is modified to S-(2,3-dicarboxypropyl)cysteine; alternate. The residue at position 288 (C288) is an S-(2-succinyl)cysteine; alternate. C319 bears the S-(2-succinyl)cysteine mark. Kelch repeat units lie at residues 327–372 (LIYT…VVGG), 373–423 (LLYA…VIDG), 424–470 (HIYA…VLNR), 471–517 (LLYA…VLHN), 519–564 (IYAA…VHQG), and 565–611 (KIYV…VTME). Position 434 is an S-cGMP-cysteine (C434). S-(2-succinyl)cysteine is present on C613.

Belongs to the KEAP1 family. As to quaternary structure, component of the BCR(KEAP1) E3 ubiquitin ligase complex, at least composed of 2 molecules of CUL3, 2 molecules of KEAP1, and RBX1. Interacts with NFE2L2/NRF2; the interaction is direct. Forms a ternary complex with NFE2L2/NRF2 and PGAM5. Interacts with (phosphorylated) SQSTM1/p62; the interaction is direct and inactivates the BCR(KEAP1) complex by sequestering it in inclusion bodies, promoting its degradation. Interacts with NFE2L1. Interacts with BPTF and PTMA. Interacts with MAP1LC3B. Interacts indirectly with ENC1. Interacts with SESN1 and SESN2. Interacts with HSP90AA1 and HSP90AB1. Interacts with PGCKA1; this interaction prevents the ubiquitination of KEAP1 by TRIM25, thus protecting KEAP1 from degradation. In terms of processing, non-enzymatic covalent modifications of reactive cysteines by electrophile metabolites inactivate the BCR(KEAP1) complex. Accumulation of fumarate promotes the formation of cysteine S-succination (S-(2-succinyl)cysteine), leading to inactivate the BCR(KEAP1) complex and promote NFE2L2/NRF2 nuclear accumulation and activation. Nitric oxide-dependent 8-Nitro-cGMP formation promotes cysteine guanylation (S-cGMP-cysteine), leading to NFE2L2/NRF2 nuclear accumulation and activation. Itaconate, an anti-inflammatory metabolite generated in response to lipopolysaccharide, alkylates cysteines, activating NFE2L2/NRF2. Methylglyoxal, a reactive metabolite that accumulates when the glycolytic enzyme PGK1 is inhibited, promotes formation of a methylimidazole cross-link between proximal Cys-151 and Arg-135 on another KEAP1 molecule, resulting in an inactive dimer that inactivates the BCR(KEAP1) complex. Degraded via a proteasomal-independent process during selective autophagy: interaction with phosphorylated SQSTM1/p62 sequesters KEAP1 in inclusion bodies, leading to its degradation. Post-translationally, auto-ubiquitinated by the BCR(KEAP1) complex. Quinone-induced oxidative stress, but not sulforaphane, increases its ubiquitination. Ubiquitination and subsequent degradation is most pronounced following prolonged exposure of cells to oxidative stress, particularly in glutathione-deficient cells that are highly susceptible to oxidative stress. Deubiquitinated by USP25; leading to stabilization. Ubiquitinated by TRIM25; leading to degradation upon ER stress.

The protein localises to the cytoplasm. It is found in the nucleus. The protein operates within protein modification; protein ubiquitination. Its activity is regulated as follows. Ubiquitin ligase activity of the BCR(KEAP1) complex is inhibited by oxidative stress and electrophile metabolites such as sulforaphane. Electrophile metabolites react with reactive cysteine residues in KEAP1 and trigger non-enzymatic covalent modifications of these cysteine residues, leading to inactivate the ubiquitin ligase activity of the BCR(KEAP1) complex. Selective autophagy also inactivates the BCR(KEAP1) complex via interaction between KEAP1 and SQSTM1/p62, which sequesters the complex in inclusion bodies and promotes its degradation. In terms of biological role, substrate-specific adapter of a BCR (BTB-CUL3-RBX1) E3 ubiquitin ligase complex that regulates the response to oxidative stress by targeting NFE2L2/NRF2 for ubiquitination. KEAP1 acts as a key sensor of oxidative and electrophilic stress: in normal conditions, the BCR(KEAP1) complex mediates ubiquitination and degradation of NFE2L2/NRF2, a transcription factor regulating expression of many cytoprotective genes. In response to oxidative stress, different electrophile metabolites trigger non-enzymatic covalent modifications of highly reactive cysteine residues in KEAP1, leading to inactivate the ubiquitin ligase activity of the BCR(KEAP1) complex, promoting NFE2L2/NRF2 nuclear accumulation and expression of phase II detoxifying enzymes. In response to selective autophagy, KEAP1 is sequestered in inclusion bodies following its interaction with SQSTM1/p62, leading to inactivation of the BCR(KEAP1) complex and activation of NFE2L2/NRF2. The BCR(KEAP1) complex also mediates ubiquitination of SQSTM1/p62, increasing SQSTM1/p62 sequestering activity and degradation. The BCR(KEAP1) complex also targets BPTF and PGAM5 for ubiquitination and degradation by the proteasome. The protein is Kelch-like ECH-associated protein 1 of Mus musculus (Mouse).